The primary structure comprises 427 residues: A-kinase anchor protein 5 (427 aa).

The disordered stretch occupies residues 1–122; sequence METTISEIHV…DADLSKKKAK (122 aa). Positions 1–170 are essential to the intracellular anchoring function; the sequence is METTISEIHV…LDIQTQTPLN (170 aa). A compositionally biased stretch (basic and acidic residues) spans 8–19; that stretch reads IHVENKDEKRSA. Position 22 is a phosphoserine (serine 22). Cysteine 36 is lipidated: S-palmitoyl cysteine. Positions 37-48 are enriched in basic residues; that stretch reads FKRRKKAAKALK. The AKAP CaM-binding signature appears at 76 to 96; the sequence is RGAWASLKRLVTRRKRSESSK. The span at 92–102 shows a compositional bias: basic and acidic residues; sequence SESSKQQKPLE. Cysteine 129 carries S-palmitoyl cysteine lipidation. 2 stretches are compositionally biased toward polar residues: residues 171-182 and 242-252; these read DQATKAKSTQDL and VQPQQASPLET. Disordered stretches follow at residues 171 to 205, 239 to 269, and 281 to 333; these read DQAT…STTS, KQDV…PPLP, and SNST…EESK. Positions 302-333 are enriched in basic and acidic residues; sequence EETKPKDTELSQESDFKENGITEEKSKSEESK. A PKA-RII subunit binding domain region spans residues 392–405; sequence LIETASSLVKNAIQ. The tethers NFATC2 to CRAC channels stretch occupies residues 410-427; the sequence is QLVNEMASDDNKINNLLQ.

Binding protein for dimer of the RII-beta regulatory subunit of cAMP-dependent protein kinase (PKA) and also for the protein kinase C (PKC) and the phosphatase calcineurin (PP2B). Each enzyme is inhibited when bound to the anchoring protein. Also binds the beta2-adrenergic receptor. Part of a complex containing AKAP5, ADCY5, ADCY6 and PDE4C. Interacts with ADCY8, and enhances its phosphorylation at lipid rafts. Interacts with ORAI1 (isoform alpha) (via N-terminus) upon store depletion and in response to LTC4. Does not interact with ORAI2 and ORAI3 paralogs. Interacts (via leucine zipper domain) with NFATC2/NFAT1. Interacts with calmodulin; the interaction is calcium-independent. Interacts with KCNQ2; the interaction may help KCNQ2 channel complex to retain calcium-bound calmodulin. Interacts with KCNK2; the channel is recruited to postsynaptic microdomains by AKAP5 where it can integrate neurotransmitter receptor signals. Part of a complex composed of AKAP5 and ADRB2. Post-translationally, palmitoylated. Palmitoylation at Cys-36 and Cys-129 play a key role in the targeting of AKAP5 to lipid rafts. Palmitoylation by ZDHHC2 is required for AKAP5 function in LTP-stimulated recycling endosome exocytosis. Predominantly in the cerebral cortex and the postsynaptic densities of the forebrain, and to a lesser extent in adrenal medulla, lung and anterior pituitary.

The protein localises to the postsynaptic recycling endosome membrane. Its subcellular location is the cell projection. The protein resides in the dendrite. It localises to the postsynaptic cell membrane. Multivalent scaffold protein that anchors the cAMP-dependent protein kinase/PKA to cytoskeletal and/or organelle-associated proteins, targeting the signal carried by cAMP to specific intracellular effectors. Association with the beta2-adrenergic receptor (beta2-AR) not only regulates beta2-AR signaling pathway, but also the activation by PKA by switching off the beta2-AR signaling cascade. Plays a role in long term synaptic potentiation by regulating protein trafficking from the dendritic recycling endosomes to the plasma membrane and controlling both structural and functional plasticity at excitatory synapses. In hippocampal pyramidal neurons, recruits KCNK2/TREK-1 channel at postsynaptic dense bodies microdomains and converts it to a leak channel no longer sensitive to stimulation by arachidonic acid, acidic pH or mechanical stress, nor inhibited by Gq-coupled receptors but still under the negative control of Gs-coupled receptors. Associates with ORAI1 pore-forming subunit of CRAC channels in Ca(2+) signaling microdomains where it recruits NFATC2/NFAT1 and couples store-operated Ca(2+) influx to calmodulin and calcineurin signaling and activation of NFAT-dependent transcriptional responses. The polypeptide is A-kinase anchor protein 5 (AKAP5) (Homo sapiens (Human)).